A 237-amino-acid polypeptide reads, in one-letter code: MEKGKFIYEGKAKQLYETDDKDLVIVHYKDDATAGNGAKKGTIHNKGIMNNEITALIFNMLEEHGIKTHFVKKLNDRDQLCQRVKIFPLEVIVRNIIAGSMAKRVGIKEGTKISNTIFEICYKNDEYGDPLINDHHAVAMGLATYDELKEIYDITGKINNLLKEKFDNIGITLVDFKIEFGKNSKGEILLADEITPDTCRLWDKKTGEKLDKDRFRRDLGNIEEAYIEVVKRLTEKK.

Belongs to the SAICAR synthetase family.

It catalyses the reaction 5-amino-1-(5-phospho-D-ribosyl)imidazole-4-carboxylate + L-aspartate + ATP = (2S)-2-[5-amino-1-(5-phospho-beta-D-ribosyl)imidazole-4-carboxamido]succinate + ADP + phosphate + 2 H(+). It functions in the pathway purine metabolism; IMP biosynthesis via de novo pathway; 5-amino-1-(5-phospho-D-ribosyl)imidazole-4-carboxamide from 5-amino-1-(5-phospho-D-ribosyl)imidazole-4-carboxylate: step 1/2. This Fusobacterium nucleatum subsp. nucleatum (strain ATCC 25586 / DSM 15643 / BCRC 10681 / CIP 101130 / JCM 8532 / KCTC 2640 / LMG 13131 / VPI 4355) protein is Phosphoribosylaminoimidazole-succinocarboxamide synthase.